A 318-amino-acid polypeptide reads, in one-letter code: Pyrroline-5-carboxylate reductase ucsG (318 aa).

This sequence belongs to the pyrroline-5-carboxylate reductase family.

It participates in mycotoxin biosynthesis. Its function is as follows. Pyrroline-5-carboxylate reductase; part of the gene cluster that mediates the biosynthesis of UCS1025A, a member of the pyrrolizidinone family that acts as a strong telomerase inhibitor and displays potent antibacterial and antitumor properties. These compounds share a hemiaminal-containing pyrrolizidinone core fused with a gamma-lactone, giving a furopyrrolizidine that is connected to a decalin fragment. The polyketide synthase module (PKS) of the PKS-NRPS ucsA is responsible for the synthesis of the polyketide backbone via the condensation of an acetyl-CoA starter unit with 6 malonyl-CoA units. The downstream nonribosomal peptide synthetase (NRPS) module then amidates the carboxyl end of the polyketide with a 2S,3S-methylproline derived from L-isoleucine by the 2-oxoglutarate-dependent dioxygenase ucsF which converts L-isoleucine to (4S,5S)-4-methylpyrroline-5-carboxylate that is further converted to 2S,3S-methylproline by the pyrroline-5-carboxylate reductase ucsG. Reductive release of the completed aminoacyl polyketide from the assembly line can form the 3-pyrrolin-2-one structure via an intramolecular Knoevenagel reaction. Because ucsA lacks a designated enoylreductase (ER) domain, the required activity is provided the enoyl reductase ucsL. This keto acyclic precursor is the substrate of the Diels-Alderase ucsH, that catalyzes the Diels-Alder cycloaddition. Oxidation of the 3S-methyl group to a carboxylate by the cytochrome P450 monooxygenase ucsK allows an oxa-Michael cyclization that might involve the reductase/dehydrogenase ucsI and which furnishes the furopyrrolizidine. The oxidase ucsJ likely plays a critical role in stereoselective reduction of the C5-C6 double bond to afford the required R-configured carboxylate group. Further enolization and oxidation at C5 by an unidentified enzyme affords the last intermediate that can undergo oxa-Michael cyclization to yield UCS1025A. The sequence is that of Pyrroline-5-carboxylate reductase ucsG from Acremonium sp.